The sequence spans 514 residues: Serine--tRNA ligase, cytoplasmic (514 aa).

An N-acetylmethionine modification is found at Met1. The interaction with tRNA stretch occupies residues 9–61 (RVDKGGDPALIRETQEKRFKDPGLVDQLVKADSEWRRCRFRADNLNKLKNLCS). Ser241 is modified (phosphoserine). Positions 271 and 302 each coordinate L-serine. ATP contacts are provided by residues 302–304 (RQE) and 318–321 (VHQF). Lys323 carries the N6-acetyllysine modification. L-serine is bound at residue Glu325. Residue 391-394 (ELVS) participates in ATP binding. L-serine is bound at residue Asn427. A disordered region spans residues 471 to 514 (VKPAPIDQEPSKKQKKQHEGSKKKAAARDVALESRLQNMEVTDA). A compositionally biased stretch (basic and acidic residues) spans 479-502 (EPSKKQKKQHEGSKKKAAARDVAL). A Nuclear localization signal motif is present at residues 482–494 (KKQKKQHEGSKKK). The segment covering 505 to 514 (RLQNMEVTDA) has biased composition (polar residues).

Belongs to the class-II aminoacyl-tRNA synthetase family. Type-1 seryl-tRNA synthetase subfamily. Homodimer. The tRNA molecule may bind across the dimer. Interacts with SIRT2. Interacts with METTL6; interaction is required for the tRNA N(3)-methylcytidine methyltransferase activity of METTL6.

The protein resides in the cytoplasm. Its subcellular location is the nucleus. The catalysed reaction is tRNA(Ser) + L-serine + ATP = L-seryl-tRNA(Ser) + AMP + diphosphate + H(+). The enzyme catalyses tRNA(Sec) + L-serine + ATP = L-seryl-tRNA(Sec) + AMP + diphosphate + H(+). Its pathway is aminoacyl-tRNA biosynthesis; selenocysteinyl-tRNA(Sec) biosynthesis; L-seryl-tRNA(Sec) from L-serine and tRNA(Sec): step 1/1. In terms of biological role, catalyzes the attachment of serine to tRNA(Ser) in a two-step reaction: serine is first activated by ATP to form Ser-AMP and then transferred to the acceptor end of tRNA(Ser). Is probably also able to aminoacylate tRNA(Sec) with serine, to form the misacylated tRNA L-seryl-tRNA(Sec), which will be further converted into selenocysteinyl-tRNA(Sec). In the nucleus, binds to the VEGFA core promoter and prevents MYC binding and transcriptional activation by MYC. Recruits SIRT2 to the VEGFA promoter, promoting deacetylation of histone H4 at 'Lys-16' (H4K16). Thereby, inhibits the production of VEGFA and sprouting angiogenesis mediated by VEGFA. This is Serine--tRNA ligase, cytoplasmic (SARS1) from Macaca fascicularis (Crab-eating macaque).